The primary structure comprises 501 residues: Cytochrome P450 monooxygeanse terP (501 aa).

Residues 2–22 (PSLLLSLLLLQVPIICAWLLV) traverse the membrane as a helical segment. Cys-441 contacts heme.

The protein belongs to the cytochrome P450 family. Requires heme as cofactor.

The protein resides in the membrane. It participates in secondary metabolite biosynthesis. Its function is as follows. Cytochrome P450 monooxygeanse; part of the gene cluster that mediates the biosynthesis of terpendoles, indole-diterpene (IDT) mycotoxins including terpendole I, terpendole K, terpendole C, as well as the kinesin Eg5 inhibitor terpendole E. TerP has dual activity and is able to convert terpendole E to 13-desoxyterpendole I and paspaline to 13-desoxypaxilline. Terpendoles biosynthesis begins with the synthesis of geranylgeranyl diphosphate (GGPP) by a yet unidentified GGPP synthase. Condensation of indole-3-glycerol phosphate with GGPP by the prenyltransferase terC then forms 3-geranylgeranylindole (3-GGI), followed by epoxidation and cyclization of this intermediate (by the FAD-dependent monooxygeanse terM and the terpene cyclase terB) to form paspaline. The cytochrome monooxygenase terQ then hydroxylates paspalline at C-11 to yield terpendole E. The cytochrome monooxygenase terP converts terpendole E to 13-desoxyterpendole I, and terQ converts 13-desoxyterpendole I into terpendole I. TerF and terK are required for conversion of terpendole I to terpendole C which is further converted to terpendole K. The sequence is that of Cytochrome P450 monooxygeanse terP from Tolypocladium album (Soil fungus).